The primary structure comprises 205 residues: Probable GTP-binding protein EngB (205 aa).

Residues 22–198 form the EngB-type G domain; the sequence is HLPEYAFIGR…LSYIDEVNQD (177 aa). Residues 30–37, 57–61, 75–78, 142–145, and 177–179 each bind GTP; these read GRSNVGKS, GKTQL, DLPG, TKAD, and TSA. Residues serine 37 and threonine 59 each contribute to the Mg(2+) site.

The protein belongs to the TRAFAC class TrmE-Era-EngA-EngB-Septin-like GTPase superfamily. EngB GTPase family. Requires Mg(2+) as cofactor.

In terms of biological role, necessary for normal cell division and for the maintenance of normal septation. In Flavobacterium psychrophilum (strain ATCC 49511 / DSM 21280 / CIP 103535 / JIP02/86), this protein is Probable GTP-binding protein EngB.